Consider the following 61-residue polypeptide: Large ribosomal subunit protein bL28 (61 aa).

The protein belongs to the bacterial ribosomal protein bL28 family.

This chain is Large ribosomal subunit protein bL28, found in Lacticaseibacillus paracasei (strain ATCC 334 / BCRC 17002 / CCUG 31169 / CIP 107868 / KCTC 3260 / NRRL B-441) (Lactobacillus paracasei).